Consider the following 207-residue polypeptide: Ribonuclease HII (207 aa).

Residues 18 to 207 (TYLSGSDEAG…PIKKISKETS (190 aa)) form the RNase H type-2 domain. Residues Asp-24, Glu-25, and Asp-116 each contribute to the a divalent metal cation site.

This sequence belongs to the RNase HII family. Mn(2+) is required as a cofactor. It depends on Mg(2+) as a cofactor.

It is found in the cytoplasm. The catalysed reaction is Endonucleolytic cleavage to 5'-phosphomonoester.. Functionally, endonuclease that specifically degrades the RNA of RNA-DNA hybrids. In Mycoplasma capricolum subsp. capricolum (strain California kid / ATCC 27343 / NCTC 10154), this protein is Ribonuclease HII.